Reading from the N-terminus, the 499-residue chain is MDVLHILQTNFVSIIIGFVVIILLWMNRGKQSNSRLPPGPAPIPLLGNLLRMDVKAPYKLYMELSKKYGSVFTVWLGSKPVVVISGYQAIKDAFVTQGEEFSGRANYPVIMTVSKGYGVLVSSGKRSKDLRRFSLMTLKTFGMGRRSIEERVQEEAKMLVKAFGEYRDSVVNPKELLCNCVGNVICSIVFGHRFENDDPMFQLIQKAVDAYFNVLSSPIGAMYNMFPRIVWCFPGNHHEMFAIVNKAKVYIQEQAEIRLKTLNISEPQDFIEAFLVKMLEEKDDPNTEFNNGNMVMTAWSLFAAGTETTSSTLRQSFLMMIKYPHIQESVQKEIDEVIGSRVPTVDDRVKMPYTDAVIHEVQRYMDLSPTSVPHKVMRDTEFYNYHIPEGTMVLPLLSSVLVDPKLFKNPDEFDPENFLDENGVFKKNDGFFAFGVGKRACPGEALARVELFLFFTSVLQRFTFTGTKPPEEINIEPACSSFGRLPRSYDCYIKLRTEK.

A heme-binding site is contributed by cysteine 441.

It belongs to the cytochrome P450 family. It depends on heme as a cofactor. In terms of tissue distribution, in kidney and in liver from juvenile and sexually mature trout from both sexes.

Its subcellular location is the endoplasmic reticulum membrane. The protein resides in the microsome membrane. It catalyses the reaction an organic molecule + reduced [NADPH--hemoprotein reductase] + O2 = an alcohol + oxidized [NADPH--hemoprotein reductase] + H2O + H(+). Functionally, has (omega-6)-hydroxylation activity toward lauric acid. This is Cytochrome P450 2M1 (cyp2m1) from Oncorhynchus mykiss (Rainbow trout).